Reading from the N-terminus, the 443-residue chain is Methyl-coenzyme M reductase II subunit beta (443 aa).

Tyr367 is a binding site for coenzyme M. Gly369 provides a ligand contact to coenzyme B.

Belongs to the methyl-coenzyme M reductase beta subunit family. In terms of assembly, MCR is a hexamer of two alpha, two beta, and two gamma chains, forming a dimer of heterotrimers. It depends on coenzyme F430 as a cofactor.

It catalyses the reaction coenzyme B + methyl-coenzyme M = methane + coenzyme M-coenzyme B heterodisulfide. Its pathway is one-carbon metabolism; methyl-coenzyme M reduction; methane from methyl-coenzyme M: step 1/1. Its function is as follows. Component of the methyl-coenzyme M reductase (MCR) I that catalyzes the reductive cleavage of methyl-coenzyme M (CoM-S-CH3 or 2-(methylthio)ethanesulfonate) using coenzyme B (CoB or 7-mercaptoheptanoylthreonine phosphate) as reductant which results in the production of methane and the mixed heterodisulfide of CoB and CoM (CoM-S-S-CoB). This is the final step in methanogenesis. This is Methyl-coenzyme M reductase II subunit beta from Methanothermobacter marburgensis (strain ATCC BAA-927 / DSM 2133 / JCM 14651 / NBRC 100331 / OCM 82 / Marburg) (Methanobacterium thermoautotrophicum).